Consider the following 658-residue polypeptide: Scarecrow-like protein 28 (658 aa).

Disordered regions lie at residues 43-85 (PCSS…TSGC), 96-115 (LATTRGNGEGFSWNNDNNNR), and 209-265 (PAAV…NNNR). Residues 214–228 (EASGGSSTSASSESR) show a composition bias toward low complexity. In terms of domain architecture, GRAS spans 265 to 654 (RNDLQRDFEL…QPLYTISAWT (390 aa)). Residues 272–336 (FELVNLLTGC…VARMWPHIFH (65 aa)) form a leucine repeat I (LRI) region. A VHIID region spans residues 355-420 (LRFLNQVTPI…NPPHHVRITG (66 aa)). A VHIID motif is present at residues 386–390 (VHIID). The leucine repeat II (LRII) stretch occupies residues 430–462 (ETGDRLHGFAEAMNLQFEFHPVVDRLEDVRLWM). The PFYRE stretch occupies residues 471 to 563 (VAVNCVMQMH…EMLFGREIRN (93 aa)). Positions 566–654 (ACEGSHRQER…QPLYTISAWT (89 aa)) are SAW.

This sequence belongs to the GRAS family. In terms of assembly, interacts with SNRNP35 and CYP95. In terms of tissue distribution, expressed in roots and sepals.

The protein localises to the nucleus. In terms of biological role, probable transcription factor involved in plant development. This chain is Scarecrow-like protein 28 (SCL28), found in Arabidopsis thaliana (Mouse-ear cress).